The following is a 637-amino-acid chain: 1-deoxy-D-xylulose-5-phosphate synthase (637 aa).

Residues His-76 and 117-119 contribute to the thiamine diphosphate site; that span reads AHS. Asp-148 provides a ligand contact to Mg(2+). Thiamine diphosphate is bound by residues 149–150, Asn-177, Tyr-287, and Glu-369; that span reads GA. Residue Asn-177 participates in Mg(2+) binding.

Belongs to the transketolase family. DXPS subfamily. As to quaternary structure, homodimer. Mg(2+) is required as a cofactor. Requires thiamine diphosphate as cofactor.

The enzyme catalyses D-glyceraldehyde 3-phosphate + pyruvate + H(+) = 1-deoxy-D-xylulose 5-phosphate + CO2. It participates in metabolic intermediate biosynthesis; 1-deoxy-D-xylulose 5-phosphate biosynthesis; 1-deoxy-D-xylulose 5-phosphate from D-glyceraldehyde 3-phosphate and pyruvate: step 1/1. In terms of biological role, catalyzes the acyloin condensation reaction between C atoms 2 and 3 of pyruvate and glyceraldehyde 3-phosphate to yield 1-deoxy-D-xylulose-5-phosphate (DXP). This chain is 1-deoxy-D-xylulose-5-phosphate synthase, found in Pelagibacter ubique (strain HTCC1062).